Here is a 156-residue protein sequence, read N- to C-terminus: Transcriptional repressor NrdR (156 aa).

A zinc finger lies at 3 to 34 (CPKCNSTHSRVVDSRHADEANAIRRRRECENC). Residues 49-139 (LIVVKKDGTR…VYKEFKDVDQ (91 aa)) enclose the ATP-cone domain.

It belongs to the NrdR family. Requires Zn(2+) as cofactor.

In terms of biological role, negatively regulates transcription of bacterial ribonucleotide reductase nrd genes and operons by binding to NrdR-boxes. This chain is Transcriptional repressor NrdR, found in Staphylococcus epidermidis (strain ATCC 35984 / DSM 28319 / BCRC 17069 / CCUG 31568 / BM 3577 / RP62A).